We begin with the raw amino-acid sequence, 171 residues long: Neudesin (171 aa).

A signal peptide spans 1 to 30 (MARPAPWWRLRLLAALVLALALVPVPSAWA). One can recognise a Cytochrome b5 heme-binding domain in the interval 43 to 128 (VRLFTEEELA…KELEALDDVF (86 aa)). Lysine 135 bears the N6-acetyllysine mark.

Belongs to the cytochrome b5 family. MAPR subfamily. Interacts with PINK1 and PARK7. In the embryo, expressed most abundantly in brain and spinal cord. Widely expressed in adult tissues including brain, heart, lung and kidney. In brain, expressed in neurons but not in glial cells. In the hypothalamus is expressed primarily in the paraventricular nucleus (PVN), with lower levels of expression in the arcuate nucleus (ARC).

It localises to the secreted. Its subcellular location is the extracellular space. The protein localises to the mitochondrion. The protein resides in the endoplasmic reticulum. Its function is as follows. Acts as a neurotrophic factor in postnatal mature neurons, enhancing neuronal survival. Promotes cell proliferation and neurogenesis in undifferentiated neural pro-genitor cells at the embryonic stage and inhibits differentiation of astrocytes. Its neurotrophic activity is exerted via MAPK1/ERK2, MAPK3/ERK1 and AKT1/AKT pathways. Neurotrophic activity is enhanced by binding to heme. Also acts as an anorexigenic neurotrophic factor that contributes to energy balance. The chain is Neudesin from Mus musculus (Mouse).